We begin with the raw amino-acid sequence, 276 residues long: Borealin (276 aa).

Residues 111 to 158 (KEAKSSANSEDENMAPLKSTMKKKKASKKAPSTSKKPRTLSISKQGGT) are disordered.

Belongs to the borealin family. As to quaternary structure, component of the CPC complex.

The protein resides in the nucleus. The protein localises to the chromosome. It localises to the centromere. Its subcellular location is the cytoplasm. It is found in the cytoskeleton. The protein resides in the spindle. In terms of biological role, component of the chromosomal passenger complex (CPC), a complex that acts as a key regulator of mitosis. The CPC complex has essential functions at the centromere in ensuring correct chromosome alignment and segregation and is required for chromatin-induced microtubule stabilization and spindle assembly. This Danio rerio (Zebrafish) protein is Borealin (cdca8).